Reading from the N-terminus, the 227-residue chain is MGDAGSERSKAPSLPPRCPCGFWGSSKTMNLCSKCFADFQKKQPDDDSTPSTSNSQSDLFSEETTSDNNNTSVTTPTLSPSQQSLPTELNVTSPSEEECGPCTDTAHVSLITPTKRSCGADSQSESEASPVKRPRLVENPERPEESGRSKQKSRRRCFQCQTKLELVQQELGSCRCGYVFCMLHRLPEQHDCTFDHMGRGREEAIMKMVKLDRKVGRSCQRIGEGCS.

An A20-type zinc finger spans residues 12–44; sequence PSLPPRCPCGFWGSSKTMNLCSKCFADFQKKQP. The Zn(2+) site is built by cysteine 18, cysteine 20, cysteine 32, and cysteine 35. The tract at residues 41 to 151 is disordered; the sequence is KKQPDDDSTP…RPEESGRSKQ (111 aa). 2 stretches are compositionally biased toward low complexity: residues 49–59 and 66–77; these read TPSTSNSQSDL and SDNNNTSVTTPT. Composition is skewed to polar residues over residues 78-94 and 111-127; these read LSPS…VTSP and ITPT…SESE. The segment covering 135 to 148 has biased composition (basic and acidic residues); it reads RLVENPERPEESGR. The segment at 151–200 adopts an AN1-type zinc-finger fold; the sequence is QKSRRRCFQCQTKLELVQQELGSCRCGYVFCMLHRLPEQHDCTFDHMGRG. Residues cysteine 157, cysteine 160, cysteine 174, cysteine 176, cysteine 181, histidine 184, histidine 190, and cysteine 192 each coordinate Zn(2+).

The sequence is that of AN1-type zinc finger protein 3 (Zfand3) from Rattus norvegicus (Rat).